Consider the following 487-residue polypeptide: N-succinylglutamate 5-semialdehyde dehydrogenase (487 aa).

NAD(+) is bound at residue 221-226 (GSSRTG). Catalysis depends on residues Glu-244 and Cys-278.

This sequence belongs to the aldehyde dehydrogenase family. AstD subfamily.

The enzyme catalyses N-succinyl-L-glutamate 5-semialdehyde + NAD(+) + H2O = N-succinyl-L-glutamate + NADH + 2 H(+). It functions in the pathway amino-acid degradation; L-arginine degradation via AST pathway; L-glutamate and succinate from L-arginine: step 4/5. Functionally, catalyzes the NAD-dependent reduction of succinylglutamate semialdehyde into succinylglutamate. The sequence is that of N-succinylglutamate 5-semialdehyde dehydrogenase from Pseudomonas entomophila (strain L48).